The sequence spans 375 residues: ATP-dependent kinase YFH7 (375 aa).

66–74 provides a ligand contact to ATP; it reads GPPGSGKST.

This sequence belongs to the YFH7 family.

ATP-dependent kinase that could be involved in endoplasmic reticulum membrane assembly. This chain is ATP-dependent kinase YFH7 (YFH7), found in Zygosaccharomyces rouxii (strain ATCC 2623 / CBS 732 / NBRC 1130 / NCYC 568 / NRRL Y-229).